The chain runs to 169 residues: 16S rRNA aminocarboxypropyltransferase (169 aa).

S-adenosyl-L-methionine contacts are provided by T17, L67, L90, and T109.

It belongs to the TDD superfamily. TSR3 family.

The protein resides in the cytoplasm. The enzyme catalyses an N(1)-methylpseudouridine in rRNA + S-adenosyl-L-methionine = N(1)-methyl-N(3)-[(3S)-3-amino-3-carboxypropyl]pseudouridine in rRNA + S-methyl-5'-thioadenosine + H(+). Functionally, aminocarboxypropyltransferase that catalyzes the aminocarboxypropyl transfer on pseudouridine corresponding to position 914 in M.jannaschii 16S rRNA. It constitutes the last step in biosynthesis of the hypermodified N1-methyl-N3-(3-amino-3-carboxypropyl) pseudouridine (m1acp3-Psi). This is 16S rRNA aminocarboxypropyltransferase from Methanothermobacter thermautotrophicus (strain ATCC 29096 / DSM 1053 / JCM 10044 / NBRC 100330 / Delta H) (Methanobacterium thermoautotrophicum).